We begin with the raw amino-acid sequence, 120 residues long: Aspartate 1-decarboxylase (120 aa).

Residue Ser-25 is the Schiff-base intermediate with substrate; via pyruvic acid of the active site. Ser-25 is subject to Pyruvic acid (Ser). Thr-57 is a substrate binding site. The active-site Proton donor is Tyr-58. Residue 73–75 (GAA) coordinates substrate.

It belongs to the PanD family. Heterooctamer of four alpha and four beta subunits. Requires pyruvate as cofactor. Post-translationally, is synthesized initially as an inactive proenzyme, which is activated by self-cleavage at a specific serine bond to produce a beta-subunit with a hydroxyl group at its C-terminus and an alpha-subunit with a pyruvoyl group at its N-terminus.

The protein localises to the cytoplasm. It catalyses the reaction L-aspartate + H(+) = beta-alanine + CO2. The protein operates within cofactor biosynthesis; (R)-pantothenate biosynthesis; beta-alanine from L-aspartate: step 1/1. In terms of biological role, catalyzes the pyruvoyl-dependent decarboxylation of aspartate to produce beta-alanine. The chain is Aspartate 1-decarboxylase from Cupriavidus necator (strain ATCC 17699 / DSM 428 / KCTC 22496 / NCIMB 10442 / H16 / Stanier 337) (Ralstonia eutropha).